Consider the following 57-residue polypeptide: Sperm protamine P1-type (57 aa).

The segment at 1 to 57 (MARYRHNRSRSRSRHRRRRRGHRGGRYRRRRRRGRYGHRRHHRGHSRRRRKRRRSRH) is disordered.

The protein belongs to the protamine P1 family. As to expression, testis.

The protein resides in the nucleus. It is found in the chromosome. Its function is as follows. Protamines substitute for histones in the chromatin of sperm during the haploid phase of spermatogenesis. They compact sperm DNA into a highly condensed, stable and inactive complex. The sequence is that of Sperm protamine P1-type from Alligator mississippiensis (American alligator).